A 153-amino-acid chain; its full sequence is Large ribosomal subunit protein uL15 (153 aa).

Positions 21–41 are disordered; it reads RGIGSGKGKTGGRGIKGQKSR. The span at 23-35 shows a compositional bias: gly residues; the sequence is IGSGKGKTGGRGI.

The protein belongs to the universal ribosomal protein uL15 family. As to quaternary structure, part of the 50S ribosomal subunit.

In terms of biological role, binds to the 23S rRNA. The sequence is that of Large ribosomal subunit protein uL15 from Rickettsia africae (strain ESF-5).